The following is a 238-amino-acid chain: Large ribosomal subunit protein uL1 (238 aa).

It belongs to the universal ribosomal protein uL1 family. In terms of assembly, part of the 50S ribosomal subunit.

Its function is as follows. Binds directly to 23S rRNA. The L1 stalk is quite mobile in the ribosome, and is involved in E site tRNA release. Protein L1 is also a translational repressor protein, it controls the translation of the L11 operon by binding to its mRNA. The protein is Large ribosomal subunit protein uL1 of Rickettsia prowazekii (strain Madrid E).